A 366-amino-acid chain; its full sequence is Anhydro-N-acetylmuramic acid kinase (366 aa).

15–22 (GTSLDGVD) lines the ATP pocket.

Belongs to the anhydro-N-acetylmuramic acid kinase family.

The enzyme catalyses 1,6-anhydro-N-acetyl-beta-muramate + ATP + H2O = N-acetyl-D-muramate 6-phosphate + ADP + H(+). It participates in amino-sugar metabolism; 1,6-anhydro-N-acetylmuramate degradation. The protein operates within cell wall biogenesis; peptidoglycan recycling. Its function is as follows. Catalyzes the specific phosphorylation of 1,6-anhydro-N-acetylmuramic acid (anhMurNAc) with the simultaneous cleavage of the 1,6-anhydro ring, generating MurNAc-6-P. Is required for the utilization of anhMurNAc either imported from the medium or derived from its own cell wall murein, and thus plays a role in cell wall recycling. The polypeptide is Anhydro-N-acetylmuramic acid kinase (Hydrogenovibrio crunogenus (strain DSM 25203 / XCL-2) (Thiomicrospira crunogena)).